We begin with the raw amino-acid sequence, 435 residues long: Ribosomal protein uS12 methylthiotransferase RimO (435 aa).

One can recognise an MTTase N-terminal domain in the interval 3–113; sequence HKVGFVSLGC…VVNAVHQHLP (111 aa). Residues Cys12, Cys48, Cys77, Cys144, Cys148, and Cys151 each coordinate [4Fe-4S] cluster. The 238-residue stretch at 130-367 folds into the Radical SAM core domain; the sequence is LTPRHYAYLK…MQVQAEISRN (238 aa). One can recognise a TRAM domain in the interval 370 to 435; the sequence is KNKIGSTQTV…DDYDLYASLV (66 aa).

The protein belongs to the methylthiotransferase family. RimO subfamily. It depends on [4Fe-4S] cluster as a cofactor.

It localises to the cytoplasm. It catalyses the reaction L-aspartate(89)-[ribosomal protein uS12]-hydrogen + (sulfur carrier)-SH + AH2 + 2 S-adenosyl-L-methionine = 3-methylsulfanyl-L-aspartate(89)-[ribosomal protein uS12]-hydrogen + (sulfur carrier)-H + 5'-deoxyadenosine + L-methionine + A + S-adenosyl-L-homocysteine + 2 H(+). Catalyzes the methylthiolation of an aspartic acid residue of ribosomal protein uS12. This is Ribosomal protein uS12 methylthiotransferase RimO from Legionella pneumophila (strain Lens).